The following is a 285-amino-acid chain: 4-diphosphocytidyl-2-C-methyl-D-erythritol kinase (285 aa).

The active site involves Lys-11. Pro-95 to Ala-105 contributes to the ATP binding site. Residue Asp-137 is part of the active site.

Belongs to the GHMP kinase family. IspE subfamily.

The catalysed reaction is 4-CDP-2-C-methyl-D-erythritol + ATP = 4-CDP-2-C-methyl-D-erythritol 2-phosphate + ADP + H(+). It participates in isoprenoid biosynthesis; isopentenyl diphosphate biosynthesis via DXP pathway; isopentenyl diphosphate from 1-deoxy-D-xylulose 5-phosphate: step 3/6. Its function is as follows. Catalyzes the phosphorylation of the position 2 hydroxy group of 4-diphosphocytidyl-2C-methyl-D-erythritol. In Paramagnetospirillum magneticum (strain ATCC 700264 / AMB-1) (Magnetospirillum magneticum), this protein is 4-diphosphocytidyl-2-C-methyl-D-erythritol kinase.